The primary structure comprises 252 residues: Osmotin-like protein (252 aa).

An N-terminal signal peptide occupies residues 1 to 24 (MASSSAKILLPLSLLFTLLSLSQS).

It is found in the secreted. It localises to the cell wall. The polypeptide is Osmotin-like protein (Solanum lycopersicum (Tomato)).